A 410-amino-acid chain; its full sequence is Arginine biosynthesis bifunctional protein ArgJ (410 aa).

6 residues coordinate substrate: threonine 158, lysine 184, threonine 195, glutamate 282, asparagine 405, and serine 410. Threonine 195 serves as the catalytic Nucleophile.

The protein belongs to the ArgJ family. As to quaternary structure, heterotetramer of two alpha and two beta chains.

The protein resides in the cytoplasm. The catalysed reaction is N(2)-acetyl-L-ornithine + L-glutamate = N-acetyl-L-glutamate + L-ornithine. The enzyme catalyses L-glutamate + acetyl-CoA = N-acetyl-L-glutamate + CoA + H(+). It functions in the pathway amino-acid biosynthesis; L-arginine biosynthesis; L-ornithine and N-acetyl-L-glutamate from L-glutamate and N(2)-acetyl-L-ornithine (cyclic): step 1/1. It participates in amino-acid biosynthesis; L-arginine biosynthesis; N(2)-acetyl-L-ornithine from L-glutamate: step 1/4. Catalyzes two activities which are involved in the cyclic version of arginine biosynthesis: the synthesis of N-acetylglutamate from glutamate and acetyl-CoA as the acetyl donor, and of ornithine by transacetylation between N(2)-acetylornithine and glutamate. This Bartonella henselae (strain ATCC 49882 / DSM 28221 / CCUG 30454 / Houston 1) (Rochalimaea henselae) protein is Arginine biosynthesis bifunctional protein ArgJ.